Reading from the N-terminus, the 979-residue chain is DNA ligase 4 (979 aa).

The interval 1 to 39 (MDSDEIMPDEEHPNVPVGDEESDIDEKYPNRPRNHSPTL) is disordered. ATP is bound by residues E320, K322, L323, R327, E389, F430, E490, K495, K512, and K514. Catalysis depends on K322, which acts as the N6-AMP-lysine intermediate. A Mg(2+)-binding site is contributed by E389. E490 serves as a coordination point for Mg(2+). BRCT domains follow at residues 721-814 (PSGH…PDFL) and 867-965 (LQES…RFQP).

This sequence belongs to the ATP-dependent DNA ligase family. Mg(2+) serves as cofactor.

The protein localises to the nucleus. The catalysed reaction is ATP + (deoxyribonucleotide)n-3'-hydroxyl + 5'-phospho-(deoxyribonucleotide)m = (deoxyribonucleotide)n+m + AMP + diphosphate.. Its function is as follows. DNA ligase involved in DNA non-homologous end joining (NHEJ); required for double-strand break (DSB) repair. The chain is DNA ligase 4 (lig4) from Aspergillus fumigatus (strain ATCC MYA-4609 / CBS 101355 / FGSC A1100 / Af293) (Neosartorya fumigata).